The sequence spans 132 residues: Small ribosomal subunit protein uS11 (132 aa).

The interval 110 to 132 is disordered; it reads IEDVTPVPSDSTRRKGGRRGRRL. Positions 123-132 are enriched in basic residues; sequence RKGGRRGRRL.

It belongs to the universal ribosomal protein uS11 family. As to quaternary structure, component of the small ribosomal subunit. Mature ribosomes consist of a small (40S) and a large (60S) subunit. The 40S subunit contains about 32 different proteins and 1 molecule of RNA (18S). The 60S subunit contains 45 different proteins and 3 molecules of RNA (25S, 5.8S and 5S).

It localises to the cytoplasm. Component of the ribosome, a large ribonucleoprotein complex responsible for the synthesis of proteins in the cell. The small ribosomal subunit (SSU) binds messenger RNAs (mRNAs) and translates the encoded message by selecting cognate aminoacyl-transfer RNA (tRNA) molecules. The large subunit (LSU) contains the ribosomal catalytic site termed the peptidyl transferase center (PTC), which catalyzes the formation of peptide bonds, thereby polymerizing the amino acids delivered by tRNAs into a polypeptide chain. The nascent polypeptides leave the ribosome through a tunnel in the LSU and interact with protein factors that function in enzymatic processing, targeting, and the membrane insertion of nascent chains at the exit of the ribosomal tunnel. RPS14B is involved in nucleolar processing of pre-18S ribosomal RNA and ribosome assembly. The chain is Small ribosomal subunit protein uS11 (RPS14B) from Candida albicans (strain SC5314 / ATCC MYA-2876) (Yeast).